We begin with the raw amino-acid sequence, 328 residues long: DNA-directed RNA polymerase subunit alpha (328 aa).

The interval 1–230 is alpha N-terminal domain (alpha-NTD); sequence MIQITGRKFK…IILDHFMFIE (230 aa). The interval 257-328 is alpha C-terminal domain (alpha-CTD); it reads PEDVMSKKVE…FGLSLRKGDK (72 aa).

The protein belongs to the RNA polymerase alpha chain family. Homodimer. The RNAP catalytic core consists of 2 alpha, 1 beta, 1 beta' and 1 omega subunit. When a sigma factor is associated with the core the holoenzyme is formed, which can initiate transcription.

The enzyme catalyses RNA(n) + a ribonucleoside 5'-triphosphate = RNA(n+1) + diphosphate. In terms of biological role, DNA-dependent RNA polymerase catalyzes the transcription of DNA into RNA using the four ribonucleoside triphosphates as substrates. The protein is DNA-directed RNA polymerase subunit alpha of Fervidobacterium nodosum (strain ATCC 35602 / DSM 5306 / Rt17-B1).